Here is a 555-residue protein sequence, read N- to C-terminus: MFS-type transporter VdtG (555 aa).

A disordered region spans residues 1–20 (MNGNGTADKPGPPGGKPFGP). N-linked (GlcNAc...) asparagine glycosylation is present at Asn-4. 3 helical membrane-spanning segments follow: residues 30–50 (TGFKLYSIMTGLYLASFLTAL), 71–91 (DIGWYGSAYLLTFCAFQLLFG), and 101–121 (WVFLSAVLIFEIGSAICGAAP). The N-linked (GlcNAc...) asparagine glycan is linked to Asn-122. 2 helical membrane passes run 132-152 (IAGLGSSGIFGGSVIITFFTV) and 162-182 (GIAGVIFALASSVGPLIGGGF). Asn-185 is a glycosylation site (N-linked (GlcNAc...) asparagine). 4 helical membrane passes run 190-210 (WCFYINLPVGALTVVTILLFL), 232-252 (LGNLCLIPGIICLLLAIQWGG), 262-282 (IVALLVLAGVLLIAFVGVQLW), and 304-324 (AFTICVTAGFMSFNYYLPIWF). Residue Asn-329 is glycosylated (N-linked (GlcNAc...) asparagine). Helical transmembrane passes span 337–357 (VMMLPTVISSGVASLACGFII), 364–384 (TPFMIGGSVLMAIGAGLLTTF), 393–413 (WIGYQVLWALGCGMSMQQASL), 425–445 (PIGISLIFFSQSLGGSVFLAV), and 497–517 (LMDVFRVAVASSCACVVAAAF). Residues 528 to 555 (AAGPGGPGGPGGPGGPGGPEGLRGGNKV) are disordered. A compositionally biased stretch (gly residues) spans 530 to 555 (GPGGPGGPGGPGGPGGPEGLRGGNKV).

It belongs to the major facilitator superfamily. TCR/Tet family.

The protein resides in the endoplasmic reticulum membrane. MFS-type transporter; part of the gene cluster that mediates the biosynthesis of viriditoxin, one of the 'classical' secondary metabolites produced by fungi and that has antibacterial activity. Is not essential for viriditoxin production. This is MFS-type transporter VdtG from Byssochlamys spectabilis (Paecilomyces variotii).